The primary structure comprises 2061 residues: Putative PWWP domain-containing DNA repair factor 4 (2061 aa).

Disordered regions lie at residues 101–211 (TNLG…SRAR), 382–408 (ALGR…RSSV), 541–586 (TPGT…GDGS), 668–694 (PATL…GDGS), 864–910 (PTPG…SERS), 1046–1072 (PGTM…GDRS), 1159–1182 (ALHG…RGDS), 1205–1383 (KAIA…RDDK), 1521–1548 (PGAL…DSSP), and 1602–1726 (KKGK…KLAN). Basic and acidic residues-rich tracts occupy residues 133 to 153 (PRED…KREN) and 162 to 173 (ESKRALRDDRSQ). Over residues 397-408 (TPGTLQGNRSSV) the composition is skewed to polar residues. Residues 1051–1061 (GDSSTARTATA) are compositionally biased toward polar residues. The span at 1364–1373 (DSSQVHTTIA) shows a compositional bias: polar residues. The span at 1639–1648 (LKEETQDSRP) shows a compositional bias: basic and acidic residues. A compositionally biased stretch (polar residues) spans 1656–1665 (PESSPFSGNI). The PWWP domain occupies 1756-1817 (RGTMVWFKFQ…KHLDCKEKEK (62 aa)).

This sequence belongs to the PWWP3A family.

The polypeptide is Putative PWWP domain-containing DNA repair factor 4 (Homo sapiens (Human)).